Reading from the N-terminus, the 156-residue chain is SCP2 sterol-binding domain-containing protein 1 (156 aa).

The SCP2 domain occupies 44–156 (TVPVFEDISQ…ERVFKDWAKW (113 aa)).

This chain is SCP2 sterol-binding domain-containing protein 1 (SCP2D1), found in Bos taurus (Bovine).